The chain runs to 709 residues: Polyribonucleotide nucleotidyltransferase (709 aa).

The Mg(2+) site is built by D485 and D491. In terms of domain architecture, KH spans 552–611; the sequence is PRIYTMKIDPKKIKDVIGKGGATIRSLTEETGTSIDIDDDGTVKIAAVDSNAAKNVMGRI. Positions 621 to 689 constitute an S1 motif domain; it reads GAIYKGKVTR…RQGRIRLTMK (69 aa).

Belongs to the polyribonucleotide nucleotidyltransferase family. Component of the RNA degradosome, which is a multiprotein complex involved in RNA processing and mRNA degradation. Mg(2+) is required as a cofactor.

It is found in the cytoplasm. It catalyses the reaction RNA(n+1) + phosphate = RNA(n) + a ribonucleoside 5'-diphosphate. Functionally, involved in mRNA degradation. Catalyzes the phosphorolysis of single-stranded polyribonucleotides processively in the 3'- to 5'-direction. The polypeptide is Polyribonucleotide nucleotidyltransferase (Haemophilus influenzae (strain PittGG)).